A 190-amino-acid chain; its full sequence is Potassium-transporting ATPase KdpC subunit (190 aa).

Residues Thr10 to Gly30 traverse the membrane as a helical segment.

The protein belongs to the KdpC family. As to quaternary structure, the system is composed of three essential subunits: KdpA, KdpB and KdpC.

The protein localises to the cell inner membrane. Part of the high-affinity ATP-driven potassium transport (or Kdp) system, which catalyzes the hydrolysis of ATP coupled with the electrogenic transport of potassium into the cytoplasm. This subunit acts as a catalytic chaperone that increases the ATP-binding affinity of the ATP-hydrolyzing subunit KdpB by the formation of a transient KdpB/KdpC/ATP ternary complex. The sequence is that of Potassium-transporting ATPase KdpC subunit from Escherichia coli O127:H6 (strain E2348/69 / EPEC).